A 258-amino-acid polypeptide reads, in one-letter code: Tryptophan synthase alpha chain (258 aa).

Residues Glu47 and Asp58 each act as proton acceptor in the active site.

Belongs to the TrpA family. In terms of assembly, tetramer of two alpha and two beta chains.

The catalysed reaction is (1S,2R)-1-C-(indol-3-yl)glycerol 3-phosphate + L-serine = D-glyceraldehyde 3-phosphate + L-tryptophan + H2O. The protein operates within amino-acid biosynthesis; L-tryptophan biosynthesis; L-tryptophan from chorismate: step 5/5. The alpha subunit is responsible for the aldol cleavage of indoleglycerol phosphate to indole and glyceraldehyde 3-phosphate. The protein is Tryptophan synthase alpha chain of Bacillus mycoides (strain KBAB4) (Bacillus weihenstephanensis).